The primary structure comprises 214 residues: ATP phosphoribosyltransferase (214 aa).

It belongs to the ATP phosphoribosyltransferase family. Short subfamily. In terms of assembly, heteromultimer composed of HisG and HisZ subunits.

Its subcellular location is the cytoplasm. It carries out the reaction 1-(5-phospho-beta-D-ribosyl)-ATP + diphosphate = 5-phospho-alpha-D-ribose 1-diphosphate + ATP. It functions in the pathway amino-acid biosynthesis; L-histidine biosynthesis; L-histidine from 5-phospho-alpha-D-ribose 1-diphosphate: step 1/9. Catalyzes the condensation of ATP and 5-phosphoribose 1-diphosphate to form N'-(5'-phosphoribosyl)-ATP (PR-ATP). Has a crucial role in the pathway because the rate of histidine biosynthesis seems to be controlled primarily by regulation of HisG enzymatic activity. This chain is ATP phosphoribosyltransferase, found in Deinococcus deserti (strain DSM 17065 / CIP 109153 / LMG 22923 / VCD115).